Consider the following 411-residue polypeptide: Putative competence-damage inducible protein (411 aa).

Belongs to the CinA family.

This chain is Putative competence-damage inducible protein, found in Alkaliphilus metalliredigens (strain QYMF).